A 128-amino-acid chain; its full sequence is MSFMKEFREFAMRGNVVDMAVGVIIGGAFGKIVSSLVGDVVMPVLGILTGGVDFKDLKFVLAEAVGETPAVTLNYGLFIQNVFDFIIIAFAIFMMVKGINKLKKPVEEAPKGPTSEELLSEIRDLLKK.

Helical transmembrane passes span 10–30 and 76–96; these read FAMR…GAFG and GLFI…FMMV.

It belongs to the MscL family. As to quaternary structure, homopentamer.

It is found in the cell inner membrane. Channel that opens in response to stretch forces in the membrane lipid bilayer. May participate in the regulation of osmotic pressure changes within the cell. The protein is Large-conductance mechanosensitive channel of Mannheimia succiniciproducens (strain KCTC 0769BP / MBEL55E).